We begin with the raw amino-acid sequence, 160 residues long: Ribosomal RNA large subunit methyltransferase H (160 aa).

The S-adenosyl-L-methionine site is built by Leu76 and Gly108.

This sequence belongs to the RNA methyltransferase RlmH family. As to quaternary structure, homodimer.

It localises to the cytoplasm. The catalysed reaction is pseudouridine(1915) in 23S rRNA + S-adenosyl-L-methionine = N(3)-methylpseudouridine(1915) in 23S rRNA + S-adenosyl-L-homocysteine + H(+). Specifically methylates the pseudouridine at position 1915 (m3Psi1915) in 23S rRNA. This Rhodopseudomonas palustris (strain HaA2) protein is Ribosomal RNA large subunit methyltransferase H.